A 1128-amino-acid chain; its full sequence is MMPMFLTVYLSNNEQHFTEVPVTPETICRDVVDLCKEPGESDCHLAEVWCGSERPVADNERMFDVLQRFGSQRNEVRFFLRHERPPGRDIVSGPRSQDPSLKRNGVKVPGEYRRKENGVNSPRMDLTLAELQEMASRQQQQIEAQQQLLATKEQRLKFLKQQDQRQQQQVAEQEKLKRLKEIAENQEAKLKKVRALKGHVEQKRLSNGKLVEEIEQMNNLFQQKQRELVLAVSKVEELTRQLEMLKNGRIDSHHDNQSAVAELDRLYKELQLRNKLNQEQNAKLQQQRECLNKRNSEVAVMDKRVNELRDRLWKKKAALQQKENLPVSSDGNLPQQAASAPSRVAAVGPYIQSSTMPRMPSRPELLVKPALPDGSLVIQASEGPMKIQTLPNMRSGAASQTKGSKIHPVGPDWSPSNADLFPSQGSASVPQSTGNALDQVDDGEVPLREKEKKVRPFSMFDAVDQSNAPPSFGTLRKNQSSEDILRDAQVANKNVAKVPPPVPTKPKQINLPYFGQTNQPPSDIKPDGSSQQLSTVVPSMGTKPKPAGQQPRVLLSPSIPSVGQDQTLSPGSKQESPPAAAVRPFTPQPSKDTLLPPFRKPQTVAASSIYSMYTQQQAPGKNFQQAVQSALTKTHTRGPHFSSVYGKPVIAAAQNQQQHPENIYSNSQGKPGSPEPETEPVSSVQENHENERIPRPLSPTKLLPFLSNPYRNQSDADLEALRKKLSNAPRPLKKRSSITEPEGPNGPNIQKLLYQRTTIAAMETISVPSYPSKSASVTASSESPVEIQNPYLHVEPEKEVVSLVPESLSPEDVGNASTENSDMPAPSPGLDYEPEGVPDNSPNLQNNPEEPNPEAPHVLDVYLEEYPPYPPPPYPSGEPEGPGEDSVSMRPPEITGQVSLPPGKRTNLRKTGSERIAHGMRVKFNPLALLLDSSLEGEFDLVQRIIYEVDDPSLPNDEGITALHNAVCAGHTEIVKFLVQFGVNVNAADSDGWTPLHCAASCNNVQVCKFLVESGAAVFAMTYSDMQTAADKCEEMEEGYTQCSQFLYGVQEKMGIMNKGVIYALWDYEPQNDDELPMKEGDCMTIIHREDEDEIEWWWARLNDKEGYVPRNLLGLYPRIKPRQRSLA.

Disordered stretches follow at residues 86 to 106 and 322 to 341; these read PGRD…RNGV and KENL…ASAP. Over residues 322–339 the composition is skewed to polar residues; the sequence is KENLPVSSDGNLPQQAAS. The interaction with APPBP1 stretch occupies residues 332 to 348; sequence NLPQQAASAPSRVAAVG. At Ser480 the chain carries Phosphoserine. Disordered stretches follow at residues 494-598 and 655-706; these read NVAK…LPPF and NQQQ…LPFL. The span at 528 to 537 shows a compositional bias: polar residues; it reads GSSQQLSTVV. Ser556, Ser569, Ser572, and Ser576 each carry phosphoserine. Residues 558–575 show a composition bias toward polar residues; sequence SIPSVGQDQTLSPGSKQE. Polar residues predominate over residues 655-670; the sequence is NQQQHPENIYSNSQGK. Ser698, Ser714, and Ser737 each carry phosphoserine. 2 disordered regions span residues 724-748 and 802-909; these read KLSN…NGPN and SLVP…TNLR. A compositionally biased stretch (low complexity) spans 840-849; sequence NSPNLQNNPE. The short motif at 866–875 is the SH3-binding element; that stretch reads YPPYPPPPYP. Pro residues predominate over residues 867 to 876; that stretch reads PPYPPPPYPS. A mediates interaction with APC2 region spans residues 876–1128; the sequence is SGEPEGPGED…RIKPRQRSLA (253 aa). 4 ANK repeats span residues 926-957, 958-990, 991-1024, and 1025-1067; these read PLAL…LPND, EGIT…AADS, DGWT…MTYS, and DMQT…ALWD. One can recognise an SH3 domain in the interval 1057 to 1119; that stretch reads MNKGVIYALW…PRNLLGLYPR (63 aa).

The protein belongs to the ASPP family. As to quaternary structure, interacts with P53/TP53; the interaction promotes pro-apoptotic activity. Interacts with BCL2. Interacts with protein phosphatase 1. Interacts with RELA NF-kappa-B subunit. This interaction probably prevents the activation of apoptosis, possibly by preventing its interaction with TP53. Interacts with APC2 and NAE1. Interacts with DDX42 (via the C-terminus); the interaction is not inhibited by TP53BP2 ubiquitination and is independent of p53/TP53. Widely expressed. Expressed in spleen, thymus, prostate, testis, ovary, small intestine, colon and peripheral blood leukocyte. Reduced expression in breast carcinomas expressing a wild-type TP53 protein. Overexpressed in lung cancer cell lines.

It is found in the cytoplasm. The protein localises to the perinuclear region. Its subcellular location is the nucleus. Its function is as follows. Regulator that plays a central role in regulation of apoptosis and cell growth via its interactions with proteins such as TP53. Regulates TP53 by enhancing the DNA binding and transactivation function of TP53 on the promoters of proapoptotic genes in vivo. Inhibits the ability of NAE1 to conjugate NEDD8 to CUL1, and thereby decreases NAE1 ability to induce apoptosis. Impedes cell cycle progression at G2/M. Its apoptosis-stimulating activity is inhibited by its interaction with DDX42. This is Apoptosis-stimulating of p53 protein 2 (TP53BP2) from Homo sapiens (Human).